Here is a 428-residue protein sequence, read N- to C-terminus: Dihydroorotase (428 aa).

Positions 59 and 61 each coordinate Zn(2+). Residues 61–63 (HLR) and asparagine 93 each bind substrate. The Zn(2+) site is built by aspartate 151, histidine 178, and histidine 231. Residue asparagine 277 coordinates substrate. A Zn(2+)-binding site is contributed by aspartate 304. Residue aspartate 304 is part of the active site. Residues histidine 308 and 322–323 (FG) each bind substrate.

This sequence belongs to the metallo-dependent hydrolases superfamily. DHOase family. Class I DHOase subfamily. The cofactor is Zn(2+).

It carries out the reaction (S)-dihydroorotate + H2O = N-carbamoyl-L-aspartate + H(+). It functions in the pathway pyrimidine metabolism; UMP biosynthesis via de novo pathway; (S)-dihydroorotate from bicarbonate: step 3/3. Its function is as follows. Catalyzes the reversible cyclization of carbamoyl aspartate to dihydroorotate. The sequence is that of Dihydroorotase from Bacillus cereus (strain B4264).